Here is a 160-residue protein sequence, read N- to C-terminus: Phosphopantetheine adenylyltransferase (160 aa).

Residue Thr9 participates in substrate binding. ATP contacts are provided by residues 9 to 10 (TF) and His17. Substrate is bound by residues Lys41, Leu73, and Arg87. ATP-binding positions include 88-90 (GLR), Glu98, and 123-129 (YSFISST).

Belongs to the bacterial CoaD family. In terms of assembly, homohexamer. Mg(2+) serves as cofactor.

Its subcellular location is the cytoplasm. The catalysed reaction is (R)-4'-phosphopantetheine + ATP + H(+) = 3'-dephospho-CoA + diphosphate. It participates in cofactor biosynthesis; coenzyme A biosynthesis; CoA from (R)-pantothenate: step 4/5. In terms of biological role, reversibly transfers an adenylyl group from ATP to 4'-phosphopantetheine, yielding dephospho-CoA (dPCoA) and pyrophosphate. This is Phosphopantetheine adenylyltransferase from Ectopseudomonas mendocina (strain ymp) (Pseudomonas mendocina).